The following is a 1247-amino-acid chain: Structural polyprotein (1247 aa).

Residues 36-67 (RPAGQLAQLISAVSRLALRTVPQKPRRTRKIK) form a host transcription inhibition region. Positions 54–103 (RTVPQKPRRTRKIKKQKQVKQEQQSTTNQKKKAPKQKQTQKKKRPGRRER) are disordered. 2 stretches are compositionally biased toward basic residues: residues 59–71 (KPRR…KQKQ) and 82–100 (QKKK…RPGR). The Nuclear localization signal signature appears at 60–98 (PRRTRKIKKQKQVKQEQQSTTNQKKKAPKQKQTQKKKRP). A binding to the viral RNA region spans residues 83-113 (KKKAPKQKQTQKKKRPGRRERMCMKIENDCI). The tract at residues 98–112 (PGRRERMCMKIENDC) is ribosome-binding. Cys112 and Cys127 are oxidised to a cystine. One can recognise a Peptidase S3 domain in the interval 112 to 260 (CIFEVRHEGK…KITPEGSVEW (149 aa)). His138 serves as the catalytic Charge relay system. Positions 143-153 (IDNADLAKLAF) match the Nuclear export signal motif. The tract at residues 154–159 (KRSSKY) is interaction with spike glycoprotein E2. Residue Asp160 is the Charge relay system of the active site. Residues 182 to 192 (PEGYYNWHHGA) are dimerization of the capsid protein. Ser212 acts as the Charge relay system in catalysis. A dimerization of the capsid protein region spans residues 218-222 (DNKGR). The interval 261 to 273 (SLALPVMCLLANT) is functions as an uncleaved signal peptide for the precursor of protein E3/E2. 9 cysteine pairs are disulfide-bonded: Cys268/Cys277, Cys282/Cys286, Cys285/Cys317, Cys343/Cys449, Cys346/Cys352, Cys415/Cys429, Cys477/Cys590, Cys525/Cys549, and Cys527/Cys544. Residue Asn272 is glycosylated (N-linked (GlcNAc...) asparagine; by host). Residues Asn587 and Asn669 are each glycosylated (N-linked (GlcNAc...) asparagine; by host). Residues 692–712 (IAVLAAASIVITSLVGLSLGM) form a helical membrane-spanning segment. An interaction with the capsid protein region spans residues 715–719 (CARRR). S-palmitoyl cysteine; by host attachment occurs at residues Cys720, Cys740, and Cys741. The chain crosses the membrane as a helical span at residues 720–740 (CITPYELTPGATIPFLLGVLC). The interval 720-740 (CITPYELTPGATIPFLLGVLC) is transient transmembrane before p62-6K protein processing. A disulfide bridge links Cys720 with Cys741. Residues 763-783 (PLFWLQLLIPLSAAIVVCNCL) traverse the membrane as a helical segment. 4 cysteine pairs are disulfide-bonded: Cys857–Cys922, Cys870–Cys902, Cys871–Cys904, and Cys876–Cys886. An E1 fusion peptide loop region spans residues 892–909 (VYPFMWGGAYCFCDAENT). N-linked (GlcNAc...) asparagine; by host glycosylation is found at Asn949 and Asn1078. 4 disulfide bridges follow: Cys1067–Cys1079, Cys1109–Cys1184, Cys1114–Cys1188, and Cys1136–Cys1178. A helical membrane pass occupies residues 1224–1244 (GVGLVVAIAALILIIVLCVSF). Cys1241 carries the S-palmitoyl cysteine; by host lipid modification. Cys1241 carries S-stearoyl cysteine; by host lipidation.

As to quaternary structure, homodimer. Homomultimer. Interacts with host karyopherin KPNA4; this interaction allows the nuclear import of the viral capsid protein. Interacts with spike glycoprotein E2. Interacts with host IRAK1; the interaction leads to inhibition of IRAK1-dependent signaling. In terms of assembly, the precursor of protein E3/E2 and E1 form a heterodimer shortly after synthesis. The precursor of protein E3/E2 and E1 form a heterodimer shortly after synthesis. Processing of the precursor of protein E3/E2 into E2 and E3 results in a heterodimer of the spike glycoproteins E2 and E1. Spike at virion surface are constituted of three E2-E1 heterodimers. After target cell attachment and endocytosis, E1 change conformation to form homotrimers. Interacts with 6K protein. As to quaternary structure, interacts with spike glycoprotein E1. Processing of the precursor of protein E3/E2 into E2 and E3 results in a heterodimer of the spike glycoproteins E2 and E1. Spike at virion surface are constituted of a trimer of E2-E1 heterodimers. Interacts with 6K protein. Interacts with host MXRA8; this interaction mediates virus entry. In terms of assembly, oligomer. Interacts with spike glycoprotein E1. Interacts with spike glycoprotein E2. Structural polyprotein: Specific enzymatic cleavages in vivo yield mature proteins. Capsid protein is auto-cleaved during polyprotein translation, unmasking a signal peptide at the N-terminus of the precursor of E3/E2. The remaining polyprotein is then targeted to the host endoplasmic reticulum, where host signal peptidase cleaves it into pE2, 6K and E1 proteins. pE2 is further processed to mature E3 and E2 by host furin in trans-Golgi vesicle. In terms of processing, palmitoylated via thioester bonds. These palmitoylations may induce disruption of the C-terminus transmembrane. This would result in the reorientation of E2 C-terminus from lumenal to cytoplasmic side. Post-translationally, N-glycosylated. Palmitoylated via thioester bonds.

It is found in the virion. Its subcellular location is the host cytoplasm. The protein resides in the host cell membrane. The protein localises to the host nucleus. It localises to the virion membrane. It is found in the host Golgi apparatus. Its subcellular location is the host trans-Golgi network. The protein resides in the host endoplasmic reticulum. It catalyses the reaction Autocatalytic release of the core protein from the N-terminus of the togavirus structural polyprotein by hydrolysis of a -Trp-|-Ser- bond.. Its function is as follows. Forms an icosahedral capsid with a T=4 symmetry composed of 240 copies of the capsid protein surrounded by a lipid membrane through which penetrate 80 spikes composed of trimers of E1-E2 heterodimers. The capsid protein binds to the viral RNA genome at a site adjacent to a ribosome binding site for viral genome translation following genome release. Possesses a protease activity that results in its autocatalytic cleavage from the nascent structural protein. Following its self-cleavage, the capsid protein transiently associates with ribosomes, and within several minutes the protein binds to viral RNA and rapidly assembles into icosahedric core particles. The resulting nucleocapsid eventually associates with the cytoplasmic domain of the spike glycoprotein E2 at the cell membrane, leading to budding and formation of mature virions. In case of infection, new virions attach to target cells and after clathrin-mediated endocytosis their membrane fuses with the host endosomal membrane. This leads to the release of the nucleocapsid into the cytoplasm, followed by an uncoating event necessary for the genomic RNA to become accessible. The uncoating might be triggered by the interaction of capsid proteins with ribosomes. Binding of ribosomes would release the genomic RNA since the same region is genomic RNA-binding and ribosome-binding. Specifically inhibits interleukin-1 receptor-associated kinase 1/IRAK1-dependent signaling during viral entry, representing a means by which the alphaviruses may evade innate immune detection and activation prior to viral gene expression. Provides the signal sequence for the translocation of the precursor of protein E3/E2 to the host endoplasmic reticulum. Furin-cleaved E3 remains associated with spike glycoprotein E1 and mediates pH protection of the latter during the transport via the secretory pathway. After virion release from the host cell, the assembly protein E3 is gradually released in the extracellular space. Functionally, plays a role in viral attachment to target host cell, by binding to the cell receptor MXRA8. Synthesized as a p62 precursor which is processed by furin at the cell membrane just before virion budding, giving rise to E2-E1 heterodimer. The p62-E1 heterodimer is stable, whereas E2-E1 is unstable and dissociate at low pH. p62 is processed at the last step, presumably to avoid E1 fusion activation before its final export to cell surface. E2 C-terminus contains a transitory transmembrane that would be disrupted by palmitoylation, resulting in reorientation of the C-terminal tail from lumenal to cytoplasmic side. This step is critical since E2 C-terminus is involved in budding by interacting with capsid proteins. This release of E2 C-terminus in cytoplasm occurs lately in protein export, and precludes premature assembly of particles at the endoplasmic reticulum membrane. In terms of biological role, acts as a viroporin that participates in virus glycoprotein processing and transport to the plasma membrane, cell permeabilization and budding of viral particles. Disrupts the calcium homeostasis of the cell, probably at the endoplasmic reticulum level. This leads to cytoplasmic calcium elevation. Because of its lipophilic properties, the 6K protein is postulated to influence the selection of lipids that interact with the transmembrane domains of the glycoproteins, which, in turn, affects the deformability of the bilayer required for the extreme curvature that occurs as budding proceeds. Present in low amount in virions, about 3% compared to viral glycoproteins. Its function is as follows. Class II viral fusion protein. Fusion activity is inactive as long as E1 is bound to E2 in mature virion. After virus attachment to target cell via host MXRA8 and endocytosis, acidification of the endosome induce dissociation of E1/E2 heterodimer and concomitant trimerization of the E1 subunits. This E1 trimer is fusion active, and promotes release of viral nucleocapsid in cytoplasm after endosome and viral membrane fusion. Efficient fusion requires the presence of cholesterol and sphingolipid in the target membrane. In O'nyong-nyong virus (strain Gulu) (ONNV), this protein is Structural polyprotein.